A 488-amino-acid chain; its full sequence is Multidrug resistance outer membrane protein MdtP (488 aa).

Positions 1-23 (MINRQLSRLLLCSILGSTTLISG) are cleaved as a signal peptide. A lipid anchor (N-palmitoyl cysteine) is attached at C24. The S-diacylglycerol cysteine moiety is linked to residue C24.

The protein belongs to the outer membrane factor (OMF) (TC 1.B.17) family. In terms of assembly, could be part of a tripartite efflux system composed of MdtN, MdtO and MdtP.

Its subcellular location is the cell outer membrane. In terms of biological role, could be involved in resistance to puromycin, acriflavine and tetraphenylarsonium chloride. The polypeptide is Multidrug resistance outer membrane protein MdtP (mdtP) (Escherichia coli (strain K12)).